The primary structure comprises 281 residues: NADPH-dependent 7-cyano-7-deazaguanine reductase (281 aa).

87-89 (VES) contacts substrate. 89–90 (SK) provides a ligand contact to NADPH. Cys-188 acts as the Thioimide intermediate in catalysis. Catalysis depends on Asp-195, which acts as the Proton donor. Residue 227–228 (HE) participates in substrate binding. NADPH is bound at residue 256-257 (RG).

It belongs to the GTP cyclohydrolase I family. QueF type 2 subfamily. Homodimer.

The protein localises to the cytoplasm. It catalyses the reaction 7-aminomethyl-7-carbaguanine + 2 NADP(+) = 7-cyano-7-deazaguanine + 2 NADPH + 3 H(+). It functions in the pathway tRNA modification; tRNA-queuosine biosynthesis. In terms of biological role, catalyzes the NADPH-dependent reduction of 7-cyano-7-deazaguanine (preQ0) to 7-aminomethyl-7-deazaguanine (preQ1). This chain is NADPH-dependent 7-cyano-7-deazaguanine reductase, found in Aliivibrio fischeri (strain MJ11) (Vibrio fischeri).